The following is a 454-amino-acid chain: Na(+)/H(+) antiporter NhaA (454 aa).

The next 10 helical transmembrane spans lie at I22–F42, M64–L84, L106–F126, G150–A170, L190–L210, V228–G248, P284–E304, L306–G326, M355–L375, and A386–S406.

This sequence belongs to the NhaA Na(+)/H(+) (TC 2.A.33) antiporter family.

The protein resides in the cell membrane. The catalysed reaction is Na(+)(in) + 2 H(+)(out) = Na(+)(out) + 2 H(+)(in). Functionally, na(+)/H(+) antiporter that extrudes sodium in exchange for external protons. The chain is Na(+)/H(+) antiporter NhaA from Bifidobacterium adolescentis (strain ATCC 15703 / DSM 20083 / NCTC 11814 / E194a).